We begin with the raw amino-acid sequence, 83 residues long: RNA-binding protein Hfq (83 aa).

A Sm domain is found at aspartate 10–valine 70.

The protein belongs to the Hfq family. In terms of assembly, homohexamer.

Functionally, RNA chaperone that binds small regulatory RNA (sRNAs) and mRNAs to facilitate mRNA translational regulation in response to envelope stress, environmental stress and changes in metabolite concentrations. Also binds with high specificity to tRNAs. The protein is RNA-binding protein Hfq of Desulforudis audaxviator (strain MP104C).